Consider the following 128-residue polypeptide: Small ribosomal subunit protein uS11 (128 aa).

The protein belongs to the universal ribosomal protein uS11 family. Part of the 30S ribosomal subunit. Interacts with proteins S7 and S18. Binds to IF-3.

Located on the platform of the 30S subunit, it bridges several disparate RNA helices of the 16S rRNA. Forms part of the Shine-Dalgarno cleft in the 70S ribosome. The chain is Small ribosomal subunit protein uS11 from Desulforudis audaxviator (strain MP104C).